A 202-amino-acid polypeptide reads, in one-letter code: Remorin 1.4 (202 aa).

Basic and acidic residues predominate over residues 1-10 (MAEEEPKKVT). The segment at 1 to 79 (MAEEEPKKVT…VEEEKKEGSV (79 aa)) is disordered. The span at 25–39 (EKPAAAADVAPQEKP) shows a compositional bias: low complexity. Residues 40-50 (VAPPPVLPSPA) are compositionally biased toward pro residues. Over residues 68 to 79 (KEVEEEKKEGSV) the composition is skewed to basic and acidic residues. Residues 123–169 (ENNKKAAVEAELKKMEEQLEKKKAEYVEQMKNKIAQIHKEAEEKRAM) are a coiled coil.

It belongs to the remorin family.

The polypeptide is Remorin 1.4 (Arabidopsis thaliana (Mouse-ear cress)).